The primary structure comprises 97 residues: Single insulin-like growth factor-binding domain protein-1 (97 aa).

The first 19 residues, 1 to 19 (MKTLFVFAVGIMLSMRASA), serve as a signal peptide directing secretion. The 77-residue stretch at 20 to 96 (FTCPECRPEL…PEIVGTCVKI (77 aa)) folds into the IGFBP N-terminal domain. A glycan (O-linked (GalNAc...) threonine) is linked at threonine 21. Cystine bridges form between cysteine 22–cysteine 45, cysteine 25–cysteine 47, cysteine 30–cysteine 48, cysteine 36–cysteine 51, cysteine 59–cysteine 75, and cysteine 69–cysteine 93.

Expressed in hemocytes.

Its subcellular location is the secreted. Its function is as follows. Has a role in the innate immune system. The protein is Single insulin-like growth factor-binding domain protein-1 of Cupiennius salei (American wandering spider).